Reading from the N-terminus, the 416-residue chain is MKTYIVGGAVRDELLGVAVKDRDYVVVGATPEAMVAQGYTPVGKDFPVFLHPKTHAEYALARTERKTAPGYKGFVFHTDASVTLEEDLIRRDLTINAMAQDEDGSIVDPFGGKRDLELRIFRHVSPAFAEDPVRILRIARFAARFPEFTVAAETNTLMQDMVTAGEVDALVPERVWQELARGLMEVRPSRMFEVLRDCGALQRILPELDVLWGVPQPAQYHPEIDTGVHIMLVIDYAAGIKADLPVRCAALLHDLGKGVTLPDQWPRHHGHEMHSVKLVDTVSKRLKIPNDCRDLALMTAREHGNVGRALELRANTIVNLLERCDAFRKPQRFIEMLQASECDHRGRTGFADKPFPQKAYLQAALAAAQTVNGGEIAELTRQRYPDQAQRIPEAIHEARVQAVAAALKKQPGDPKE.

The ATP site is built by G8 and R11. Residues G8 and R11 each contribute to the CTP site. D21 and D23 together coordinate Mg(2+). The ATP site is built by R91, R137, and R140. Residues R91, R137, and R140 each contribute to the CTP site. One can recognise an HD domain in the interval 226–327 (TGVHIMLVID…VNLLERCDAF (102 aa)).

Belongs to the tRNA nucleotidyltransferase/poly(A) polymerase family. Bacterial CCA-adding enzyme type 1 subfamily. Monomer. Can also form homodimers and oligomers. Mg(2+) is required as a cofactor. Ni(2+) serves as cofactor.

It carries out the reaction a tRNA precursor + 2 CTP + ATP = a tRNA with a 3' CCA end + 3 diphosphate. It catalyses the reaction a tRNA with a 3' CCA end + 2 CTP + ATP = a tRNA with a 3' CCACCA end + 3 diphosphate. In terms of biological role, catalyzes the addition and repair of the essential 3'-terminal CCA sequence in tRNAs without using a nucleic acid template. Adds these three nucleotides in the order of C, C, and A to the tRNA nucleotide-73, using CTP and ATP as substrates and producing inorganic pyrophosphate. tRNA 3'-terminal CCA addition is required both for tRNA processing and repair. Also involved in tRNA surveillance by mediating tandem CCA addition to generate a CCACCA at the 3' terminus of unstable tRNAs. While stable tRNAs receive only 3'-terminal CCA, unstable tRNAs are marked with CCACCA and rapidly degraded. This is Multifunctional CCA protein from Janthinobacterium sp. (strain Marseille) (Minibacterium massiliensis).